The primary structure comprises 499 residues: Inosine-5'-monophosphate dehydrogenase (499 aa).

2 consecutive CBS domains span residues I106–V165 and M169–A225. NAD(+) is bound by residues D260 and G308–G310. K(+)-binding residues include G310 and G312. S313 lines the IMP pocket. C315 serves as a coordination point for K(+). The active-site Thioimidate intermediate is the C315. Residues D348–G350, G371–S372, and Y395–G399 contribute to the IMP site. R411 serves as the catalytic Proton acceptor. E425 serves as a coordination point for IMP. Residues E479, G480, and H481 each coordinate K(+). The tract at residues G480–E499 is disordered.

Belongs to the IMPDH/GMPR family. As to quaternary structure, homotetramer. The cofactor is K(+).

It catalyses the reaction IMP + NAD(+) + H2O = XMP + NADH + H(+). It functions in the pathway purine metabolism; XMP biosynthesis via de novo pathway; XMP from IMP: step 1/1. Mycophenolic acid (MPA) is a non-competitive inhibitor that prevents formation of the closed enzyme conformation by binding to the same site as the amobile flap. In contrast, mizoribine monophosphate (MZP) is a competitive inhibitor that induces the closed conformation. MPA is a potent inhibitor of mammalian IMPDHs but a poor inhibitor of the bacterial enzymes. MZP is a more potent inhibitor of bacterial IMPDH. Functionally, catalyzes the conversion of inosine 5'-phosphate (IMP) to xanthosine 5'-phosphate (XMP), the first committed and rate-limiting step in the de novo synthesis of guanine nucleotides, and therefore plays an important role in the regulation of cell growth. This is Inosine-5'-monophosphate dehydrogenase from Halobacterium salinarum (strain ATCC 700922 / JCM 11081 / NRC-1) (Halobacterium halobium).